A 310-amino-acid chain; its full sequence is 26S proteasome non-ATPase regulatory subunit 14 (310 aa).

The region spanning 31-166 (VYISSLALLK…IDAFRLINAN (136 aa)) is the MPN domain. Residues histidine 113, histidine 115, and aspartate 126 each contribute to the Zn(2+) site. Positions 113-126 (HSHPGFGCWLSGVD) match the JAMM motif motif. 2 positions are modified to phosphoserine: serine 150 and serine 224. Threonine 266 carries the post-translational modification Phosphothreonine.

Belongs to the peptidase M67A family. PSMD14 subfamily. In terms of assembly, component of the 19S proteasome regulatory particle complex. The 26S proteasome consists of a 20S core particle (CP) and two 19S regulatory subunits (RP). The regulatory particle is made of a lid composed of 9 subunits including PSMD4, a base containing 6 ATPases and few additional components. Within the complex, PSMD4 interacts with subunit PSMD7 through their respective MPN domain. Interacts with TXNL1. As to expression, widely expressed. Highest levels in heart and skeletal muscle.

Functionally, component of the 26S proteasome, a multiprotein complex involved in the ATP-dependent degradation of ubiquitinated proteins. This complex plays a key role in the maintenance of protein homeostasis by removing misfolded or damaged proteins, which could impair cellular functions, and by removing proteins whose functions are no longer required. Therefore, the proteasome participates in numerous cellular processes, including cell cycle progression, apoptosis, or DNA damage repair. The PSMD14 subunit is a metalloprotease that specifically cleaves 'Lys-63'-linked polyubiquitin chains within the complex. Plays a role in response to double-strand breaks (DSBs): acts as a regulator of non-homologous end joining (NHEJ) by cleaving 'Lys-63'-linked polyubiquitin, thereby promoting retention of JMJD2A/KDM4A on chromatin and restricting TP53BP1 accumulation. Also involved in homologous recombination repair by promoting RAD51 loading. In Homo sapiens (Human), this protein is 26S proteasome non-ATPase regulatory subunit 14 (PSMD14).